The following is a 477-amino-acid chain: RNA pseudouridine synthase 4, mitochondrial (477 aa).

Residues 1–43 constitute a mitochondrion transit peptide; it reads MAKWRLATATLRRQLQSSSPTISTFKNPTKALSAAAHQSTRSY. A disordered region spans residues 34–55; sequence AAAHQSTRSYSTTQTDDSRGKW. The span at 36–48 shows a compositional bias: polar residues; that stretch reads AHQSTRSYSTTQT. Residues 90 to 175 form the S4 RNA-binding domain; it reads TTALRWILRC…AKKESFQCSD (86 aa). Residue Asp236 is part of the active site.

It belongs to the pseudouridine synthase RluA family.

Its subcellular location is the mitochondrion. It catalyses the reaction a uridine in RNA = a pseudouridine in RNA. This Arabidopsis thaliana (Mouse-ear cress) protein is RNA pseudouridine synthase 4, mitochondrial.